A 280-amino-acid chain; its full sequence is Chemotaxis protein methyltransferase 2 (280 aa).

One can recognise a CheR-type methyltransferase domain in the interval 10–280 (FGNQEFHYTR…SVGQTVYSPA (271 aa)). S-adenosyl-L-methionine contacts are provided by residues Asn-85, Thr-87, Arg-91, Glu-125, Asp-150, 208 to 209 (NL), and 226 to 227 (RN).

Interacts with the C-terminal pentapeptide GWEEF of the methyl-accepting chemotaxis protein McpB.

The catalysed reaction is L-glutamyl-[protein] + S-adenosyl-L-methionine = [protein]-L-glutamate 5-O-methyl ester + S-adenosyl-L-homocysteine. Functionally, methylation of the methyl-accepting chemotaxis proteins (MCP) to form gamma-glutamyl methyl ester residues in MCP. It specifically targets the McpB chemoreceptor. The polypeptide is Chemotaxis protein methyltransferase 2 (Pseudomonas aeruginosa (strain ATCC 15692 / DSM 22644 / CIP 104116 / JCM 14847 / LMG 12228 / 1C / PRS 101 / PAO1)).